The sequence spans 222 residues: 7-cyano-7-deazaguanine synthase (222 aa).

14-24 (FSGGQDSTTCL) lines the ATP pocket. 4 residues coordinate Zn(2+): cysteine 190, cysteine 199, cysteine 202, and cysteine 205.

The protein belongs to the QueC family. In terms of assembly, homodimer. Zn(2+) is required as a cofactor.

It catalyses the reaction 7-carboxy-7-deazaguanine + NH4(+) + ATP = 7-cyano-7-deazaguanine + ADP + phosphate + H2O + H(+). The protein operates within purine metabolism; 7-cyano-7-deazaguanine biosynthesis. Its function is as follows. Catalyzes the ATP-dependent conversion of 7-carboxy-7-deazaguanine (CDG) to 7-cyano-7-deazaguanine (preQ(0)). This Staphylococcus aureus (strain Mu3 / ATCC 700698) protein is 7-cyano-7-deazaguanine synthase.